The following is a 76-amino-acid chain: MEYRKRVDALVFFSLLLLGYFAAHAHGKAKEGIMQGNGARCVVGFPPCKDNKCYCCIGGRTHARYSTMAECSHACF.

The signal sequence occupies residues 1–27 (MEYRKRVDALVFFSLLLLGYFAAHAHG). Residues C53 and C75 are joined by a disulfide bond.

The protein belongs to the MEG family. As to expression, expressed exclusively in endosperm.

This is Protein MATERNALLY EXPRESSED GENE 4 (MEG4) from Zea mays (Maize).